A 106-amino-acid chain; its full sequence is UPF0122 protein Exig_1902 (106 aa).

This sequence belongs to the UPF0122 family.

In terms of biological role, might take part in the signal recognition particle (SRP) pathway. This is inferred from the conservation of its genetic proximity to ftsY/ffh. May be a regulatory protein. This is UPF0122 protein Exig_1902 from Exiguobacterium sibiricum (strain DSM 17290 / CCUG 55495 / CIP 109462 / JCM 13490 / 255-15).